Consider the following 212-residue polypeptide: Large ribosomal subunit protein mL48 (212 aa).

The transit peptide at 1–28 (MNGALGKVLCLKNDTIFKQAFSLLRFRT) directs the protein to the mitochondrion. Lys199 carries the post-translational modification N6-succinyllysine.

It belongs to the mitochondrion-specific ribosomal protein mL48 family. In terms of assembly, component of the mitochondrial ribosome large subunit (39S) which comprises a 16S rRNA and about 50 distinct proteins. Interacts with OXA1L.

The protein resides in the mitochondrion. This chain is Large ribosomal subunit protein mL48 (MRPL48), found in Bos taurus (Bovine).